The following is a 231-amino-acid chain: L-ribulose-5-phosphate 4-epimerase SgbE (231 aa).

Substrate is bound by residues 27 to 28 (GN), 44 to 45 (SG), and 74 to 75 (SS). Residues Asp76, His95, and His97 each coordinate Zn(2+). Asp120 functions as the Proton donor/acceptor in the catalytic mechanism. A Zn(2+)-binding site is contributed by His171. The active-site Proton donor/acceptor is Tyr229.

The protein belongs to the aldolase class II family. AraD/FucA subfamily. Requires Zn(2+) as cofactor.

The enzyme catalyses L-ribulose 5-phosphate = D-xylulose 5-phosphate. Functionally, catalyzes the interconversion of L-ribulose 5-phosphate (LRu5P) and D-xylulose 5-phosphate (D-Xu5P) via a retroaldol/aldol mechanism (carbon-carbon bond cleavage analogous to a class II aldolase reaction). May be involved in the utilization of 2,3-diketo-L-gulonate. This Haemophilus influenzae (strain ATCC 51907 / DSM 11121 / KW20 / Rd) protein is L-ribulose-5-phosphate 4-epimerase SgbE.